The sequence spans 174 residues: Nucleoside-triphosphatase THEP1 (174 aa).

Residues 15–22 (GMPGVGKT) and 102–109 (LAIVDEIG) each bind ATP.

The protein belongs to the THEP1 NTPase family.

The catalysed reaction is a ribonucleoside 5'-triphosphate + H2O = a ribonucleoside 5'-diphosphate + phosphate + H(+). Has nucleotide phosphatase activity towards ATP, GTP, CTP, TTP and UTP. May hydrolyze nucleoside diphosphates with lower efficiency. In Pyrobaculum islandicum (strain DSM 4184 / JCM 9189 / GEO3), this protein is Nucleoside-triphosphatase THEP1.